The sequence spans 408 residues: GDSL esterase/lipase At1g54790 (408 aa).

Positions 1-24 are cleaved as a signal peptide; the sequence is MNITKMKLFYVILFFISSLQISNS. The Nucleophile role is filled by Ser-38. 3 N-linked (GlcNAc...) asparagine glycosylation sites follow: Asn-273, Asn-289, and Asn-361. Residues Asp-370 and His-373 contribute to the active site.

It belongs to the 'GDSL' lipolytic enzyme family.

It is found in the secreted. The chain is GDSL esterase/lipase At1g54790 from Arabidopsis thaliana (Mouse-ear cress).